A 325-amino-acid polypeptide reads, in one-letter code: Biotin synthase (325 aa).

One can recognise a Radical SAM core domain in the interval 52–281; that stretch reads YQKDDVVLCS…AKPLLICGGR (230 aa). [4Fe-4S] cluster is bound by residues C70, C74, and C77. [2Fe-2S] cluster contacts are provided by S114, C146, and C206.

It belongs to the radical SAM superfamily. Biotin synthase family. As to quaternary structure, homodimer. [4Fe-4S] cluster serves as cofactor. [2Fe-2S] cluster is required as a cofactor.

It catalyses the reaction (4R,5S)-dethiobiotin + (sulfur carrier)-SH + 2 reduced [2Fe-2S]-[ferredoxin] + 2 S-adenosyl-L-methionine = (sulfur carrier)-H + biotin + 2 5'-deoxyadenosine + 2 L-methionine + 2 oxidized [2Fe-2S]-[ferredoxin]. Its pathway is cofactor biosynthesis; biotin biosynthesis; biotin from 7,8-diaminononanoate: step 2/2. Its function is as follows. Catalyzes the conversion of dethiobiotin (DTB) to biotin by the insertion of a sulfur atom into dethiobiotin via a radical-based mechanism. The chain is Biotin synthase from Syntrophus aciditrophicus (strain SB).